A 279-amino-acid chain; its full sequence is Movement protein (279 aa).

This sequence belongs to the cucumovirus movement protein family.

Its subcellular location is the host cell junction. The protein localises to the host plasmodesma. Transports viral genome to neighboring plant cells directly through plasmosdesmata, without any budding. The movement protein allows efficient cell to cell propagation, by bypassing the host cell wall barrier. Acts by forming a tubular structure at the host plasmodesmata, enlarging it enough to allow free passage of virion capsids. This is Movement protein from Cucumber mosaic virus (strain Ixora) (CMV).